The sequence spans 129 residues: D-ribose pyranase (129 aa).

Residue H20 is the Proton donor of the active site. Substrate is bound by residues D28, H96, and Y118–N120.

This sequence belongs to the RbsD / FucU family. RbsD subfamily. Homodecamer.

The protein resides in the cytoplasm. It catalyses the reaction beta-D-ribopyranose = beta-D-ribofuranose. It functions in the pathway carbohydrate metabolism; D-ribose degradation; D-ribose 5-phosphate from beta-D-ribopyranose: step 1/2. In terms of biological role, catalyzes the interconversion of beta-pyran and beta-furan forms of D-ribose. The protein is D-ribose pyranase of Shouchella clausii (strain KSM-K16) (Alkalihalobacillus clausii).